Consider the following 332-residue polypeptide: UPF0158 protein TC_0713 (332 aa).

Disordered stretches follow at residues 196 to 215 (ALNP…KVEA) and 291 to 332 (LGYD…KARS). Over residues 295 to 316 (GDGDASDFFGEEYDDDDDDDDD) the composition is skewed to acidic residues. Over residues 320-332 (KKAAKRGRKKARS) the composition is skewed to basic residues.

The protein belongs to the UPF0158 family.

This Chlamydia muridarum (strain MoPn / Nigg) protein is UPF0158 protein TC_0713.